Here is a 122-residue protein sequence, read N- to C-terminus: UPF0382 membrane protein SH2409 (122 aa).

Helical transmembrane passes span 3–23, 46–66, 69–89, and 98–118; these read LFIILGALCTMMSVGTGAFGA, MYHGLGLIIIGVISGTTSINV, AGWLLFLGVVFFSGSLYILAL, and ITPIGGLLFIAGWLMLIISTF.

Belongs to the UPF0382 family.

The protein resides in the cell membrane. In Staphylococcus haemolyticus (strain JCSC1435), this protein is UPF0382 membrane protein SH2409.